The primary structure comprises 274 residues: Carboxy-S-adenosyl-L-methionine synthase (274 aa).

S-adenosyl-L-methionine-binding positions include Y59, 93 to 95, 149 to 150, N164, and R231; these read GCS and DI.

This sequence belongs to the class I-like SAM-binding methyltransferase superfamily. Cx-SAM synthase family. Homodimer.

The catalysed reaction is prephenate + S-adenosyl-L-methionine = carboxy-S-adenosyl-L-methionine + 3-phenylpyruvate + H2O. Catalyzes the conversion of S-adenosyl-L-methionine (SAM) to carboxy-S-adenosyl-L-methionine (Cx-SAM). The protein is Carboxy-S-adenosyl-L-methionine synthase of Psychrobacter sp. (strain PRwf-1).